Consider the following 953-residue polypeptide: Isoleucine--tRNA ligase (953 aa).

The 'HIGH' region signature appears at 57-67; sequence PYANGDIHIGH. L-isoleucyl-5'-AMP is bound at residue glutamate 582. Positions 623-627 match the 'KMSKS' region motif; that stretch reads KMSKS. Lysine 626 contributes to the ATP binding site. Zn(2+) is bound by residues cysteine 916, cysteine 919, cysteine 936, and cysteine 939.

It belongs to the class-I aminoacyl-tRNA synthetase family. IleS type 1 subfamily. Monomer. Zn(2+) is required as a cofactor.

It localises to the cytoplasm. It carries out the reaction tRNA(Ile) + L-isoleucine + ATP = L-isoleucyl-tRNA(Ile) + AMP + diphosphate. In terms of biological role, catalyzes the attachment of isoleucine to tRNA(Ile). As IleRS can inadvertently accommodate and process structurally similar amino acids such as valine, to avoid such errors it has two additional distinct tRNA(Ile)-dependent editing activities. One activity is designated as 'pretransfer' editing and involves the hydrolysis of activated Val-AMP. The other activity is designated 'posttransfer' editing and involves deacylation of mischarged Val-tRNA(Ile). The polypeptide is Isoleucine--tRNA ligase (Bordetella petrii (strain ATCC BAA-461 / DSM 12804 / CCUG 43448)).